A 94-amino-acid chain; its full sequence is DNA-directed RNA polymerase subunit Rpo11 (94 aa).

The protein belongs to the archaeal Rpo11/eukaryotic RPB11/RPC19 RNA polymerase subunit family. In terms of assembly, part of the RNA polymerase complex.

The protein resides in the cytoplasm. The enzyme catalyses RNA(n) + a ribonucleoside 5'-triphosphate = RNA(n+1) + diphosphate. In terms of biological role, DNA-dependent RNA polymerase (RNAP) catalyzes the transcription of DNA into RNA using the four ribonucleoside triphosphates as substrates. This is DNA-directed RNA polymerase subunit Rpo11 from Natronomonas pharaonis (strain ATCC 35678 / DSM 2160 / CIP 103997 / JCM 8858 / NBRC 14720 / NCIMB 2260 / Gabara) (Halobacterium pharaonis).